Consider the following 229-residue polypeptide: NAD(P)H-quinone oxidoreductase subunit K, chloroplastic (229 aa).

The [4Fe-4S] cluster site is built by cysteine 43, cysteine 44, cysteine 108, and cysteine 139.

Belongs to the complex I 20 kDa subunit family. NDH is composed of at least 16 different subunits, 5 of which are encoded in the nucleus. Requires [4Fe-4S] cluster as cofactor.

Its subcellular location is the plastid. The protein localises to the chloroplast thylakoid membrane. It carries out the reaction a plastoquinone + NADH + (n+1) H(+)(in) = a plastoquinol + NAD(+) + n H(+)(out). The enzyme catalyses a plastoquinone + NADPH + (n+1) H(+)(in) = a plastoquinol + NADP(+) + n H(+)(out). Functionally, NDH shuttles electrons from NAD(P)H:plastoquinone, via FMN and iron-sulfur (Fe-S) centers, to quinones in the photosynthetic chain and possibly in a chloroplast respiratory chain. The immediate electron acceptor for the enzyme in this species is believed to be plastoquinone. Couples the redox reaction to proton translocation, and thus conserves the redox energy in a proton gradient. The protein is NAD(P)H-quinone oxidoreductase subunit K, chloroplastic of Piper cenocladum (Ant piper).